A 260-amino-acid polypeptide reads, in one-letter code: Small ribosomal subunit protein uS3 (260 aa).

In terms of domain architecture, KH type-2 spans 39–114; that stretch reads LRQYIEQKLG…QIRINVVEVQ (76 aa). Residues 217–260 form a disordered region; it reads GQEPDPLPPASRDRERDPRDRDREPRRRQQQRRRQQFEDRSNEG. Basic and acidic residues-rich tracts occupy residues 227–243 and 251–260; these read SRDRERDPRDRDREPRR and QQFEDRSNEG.

The protein belongs to the universal ribosomal protein uS3 family. In terms of assembly, part of the 30S ribosomal subunit. Forms a tight complex with proteins S10 and S14.

In terms of biological role, binds the lower part of the 30S subunit head. Binds mRNA in the 70S ribosome, positioning it for translation. The chain is Small ribosomal subunit protein uS3 from Nostoc punctiforme (strain ATCC 29133 / PCC 73102).